Consider the following 993-residue polypeptide: MATSSFNINELVASHGDKGLLATALVDKTAHEQLEEQLQHQRRGRKVYIRNVLGVKDSEVIRNRYGGKYDLHLTQQEFAPHGLAGALRLCETLDCLDSFPSSGLRQDLVLDFGGSWVTHYLRGHNVHCCSPCLGIRDKMRHAERLMNMRKIILNDPQQFDGRQPDFCTQPAADCKVQAHFAISIHGGYDMGFRGLCEAMNAHGTTILKGTMMFDGAMMFDDQGVIPELNCQWRKIRSAFSETEDVTPLVGKLNSTVFSRVRKFKTMVAFDFINESTMSYVHDWENIKSFLTDQTYSYRGMTYGIERCVIHAGIMTYKIIGVPGMCPPELIRHCIWFPSIKDYVGLKIPASQDLVEWKTVRILTSTLRETEEIAMRCYNDKKAWMEQFKVILGVLSAKSSTIVINGMSMQSGERIDINDYHYIGFAILLHTKMKYEQLGKMYDMWNASSISKWFAALTRPLRVFFSSVVHALFPTLRPREEKEFLIKLSTFVTFNEECSFDGGEEWDVISSAAYVATQAVTDGKILAAQKAEKLAEKLAQPVSEVSDSPETSSQTPDDTADVCGREREVSELDSLSAQTRSPITRVAERATAMLEYAAYEKQLHDTTVSNLKRIWNMAGGDDKRNSLEGNLKFVFDTYFTVDPMVNIHFSTGRWMRPVPEGIVYSVGYNERGLGPKSDGELYIVNSECVICNSESLSTVTRSLQAPTGTISQVDGVAGCGKTTAIKSIFEPSTDMIVTANKKSAQDVRMALFKSSDSKEACTFVRTADSVLLNECPTVSRVLVDEVVLLHFGQLCAVMSKLKAVRAICFGDSEQIAFSSRDASFDMRFSKIIPDETSDADTTFRSPQDVVPLVRLMATKALPKGTHSKYTKWVSQSKVKRSVTSRAIASVTLVDLDSSRFYITMTQADKASLISRAKEMNLPKTFWNERIKTVHESQGISEDHVTLVRLKSTKCDLFKQFSYCLVALTRHKVTFRYEYCGVLNGDLIAECVARA.

The interval 51 to 409 is methyltransferase; it reads NVLGVKDSEV…TIVINGMSMQ (359 aa). Residues 72-290 form the Alphavirus-like MT domain; it reads HLTQQEFAPH…HDWENIKSFL (219 aa). Residues 538–561 are disordered; the sequence is AQPVSEVSDSPETSSQTPDDTADV. The segment covering 542–556 has biased composition (polar residues); that stretch reads SEVSDSPETSSQTPD. Residues 687–838 form the (+)RNA virus helicase ATP-binding domain; it reads CVICNSESLS…KIIPDETSDA (152 aa). Residues 712 to 975 form an ATP-dependent helicase region; sequence VDGVAGCGKT…LTRHKVTFRY (264 aa). 714-721 contributes to the ATP binding site; sequence GVAGCGKT. Residues 839–993 enclose the (+)RNA virus helicase C-terminal domain; that stretch reads DTTFRSPQDV…DLIAECVARA (155 aa).

Belongs to the bromoviridae replication protein 1a family. Interacts with RNA-directed RNA polymerase 2a.

Its subcellular location is the host endoplasmic reticulum membrane. Its function is as follows. Involved in the virus replication. Contains a helicase domain and a methyltransferase domain. The methyltransferase domain is probably involved in viral RNA capping. Involved in the formation of ER membrane spherular invaginations in which RNA replication complexes form. In Cucumber mosaic virus (strain FNY) (CMV), this protein is Replication protein 1a.